Reading from the N-terminus, the 236-residue chain is Uridylate kinase (236 aa).

12 to 15 (KISG) lines the ATP pocket. The segment at 20–25 (GKKGFG) is involved in allosteric activation by GTP. Residue glycine 54 participates in UMP binding. The ATP site is built by glycine 55 and arginine 59. Residues aspartate 72 and 133 to 140 (TGNPYFST) each bind UMP. ATP-binding residues include tyrosine 166 and aspartate 169.

This sequence belongs to the UMP kinase family. In terms of assembly, homohexamer.

The protein resides in the cytoplasm. It catalyses the reaction UMP + ATP = UDP + ADP. It functions in the pathway pyrimidine metabolism; CTP biosynthesis via de novo pathway; UDP from UMP (UMPK route): step 1/1. Its activity is regulated as follows. Allosterically activated by GTP. Inhibited by UTP. Functionally, catalyzes the reversible phosphorylation of UMP to UDP. This chain is Uridylate kinase, found in Clostridium novyi (strain NT).